The sequence spans 142 residues: Alpha-lactalbumin (142 aa).

The signal sequence occupies residues 1 to 19 (MMSFVSLLLVGILFHATQA). The C-type lysozyme domain occupies 20 to 142 (EQLTKCEVFR…KLDQWLCEKL (123 aa)). Disulfide bonds link Cys25–Cys139, Cys47–Cys130, Cys80–Cys96, and Cys92–Cys110. Residue Asn64 is glycosylated (N-linked (GlcNAc...) asparagine). Residues Lys98, Asp101, Asp103, Asp106, and Asp107 each contribute to the Ca(2+) site.

The protein belongs to the glycosyl hydrolase 22 family. As to quaternary structure, lactose synthase (LS) is a heterodimer of a catalytic component, beta1,4-galactosyltransferase (beta4Gal-T1) and a regulatory component, alpha-lactalbumin (LA). In terms of tissue distribution, mammary gland specific. Secreted in milk.

It localises to the secreted. Functionally, regulatory subunit of lactose synthase, changes the substrate specificity of galactosyltransferase in the mammary gland making glucose a good acceptor substrate for this enzyme. This enables LS to synthesize lactose, the major carbohydrate component of milk. In other tissues, galactosyltransferase transfers galactose onto the N-acetylglucosamine of the oligosaccharide chains in glycoproteins. In Bos taurus (Bovine), this protein is Alpha-lactalbumin (LALBA).